Here is an 880-residue protein sequence, read N- to C-terminus: MKELSSAQIRQMYLDFFKSKGHDVMKSAPLIPHDDPTLLWINSGVATMKKYFDGSVVPKNHRITSSQKSIRTNDIENVGHTARHHTLFEMLGNFSVGDYFKKEAITWAWELLTSPEWFDMDKEKLYITVYPEDKDAKKYWEEVGVDPSHIYEAEDNFWDIGEGPSGPDSEIFFDRGQEMNNLPEDDPESYPGGENERYLEIWNIVFSEFNHKPDGTYEPLPHKNIDTGMGLERVVSVFQHARTNFETDLFLPIIEKTAELSAGKKYGENAEADVSFKVIADHARAVTFAIGDGALPSNEGRGYVIRRLIRRAVMHGQKLGIDEAFLYKLVPVVGKIMESAYPEVLEQAEFIEKVIKMEEDRFNDTLKDGMQLLDSLIAETKENGGKELPGKPVFKLYDTYGFPLELTKEYANDEGLDVDEEGFNEEMEQQKARARAARSDAKSMGVQNGLLTDITTSSEYVGYHELKANGVLKDIIIDNELVDTVPADSRAQVIFDKTPFYAEMGGQVADKGVIKNQAGEVVAEVEDVQHAPNGQNMHTIHALKEMTRENTYSLEVDVAFHNKVKKNHTATHLLDQALRDVLGSHTHQAGSLVEPTYLRFDFTNLGSVTAEDLKKIEDIVNAKIWENIQVETVVTDKESAEKMGAIALFGDKYGDTVRVVKVGDYSMEFCGGTHVANTNEIGLFKIVSESGVGAGVRRIEAVTSEEAFEFLEERNQLLRQSADELKIVQIKEVPRKIEQLQEQVKLLEQQKQALEDKFASQQAGDIFKNIKDINGKTLIAGQVNVSGMSQLRQLADQWKEKQLSDVLVLATATADGKVNLITAISSDAVKEGYKAGDLIKAIAPKVGGGGGGRPDLAQAGGKKPEGIQEALKAAEDWLNK.

Zn(2+) contacts are provided by H568, H572, C670, and H674.

It belongs to the class-II aminoacyl-tRNA synthetase family. Requires Zn(2+) as cofactor.

It localises to the cytoplasm. The catalysed reaction is tRNA(Ala) + L-alanine + ATP = L-alanyl-tRNA(Ala) + AMP + diphosphate. Functionally, catalyzes the attachment of alanine to tRNA(Ala) in a two-step reaction: alanine is first activated by ATP to form Ala-AMP and then transferred to the acceptor end of tRNA(Ala). Also edits incorrectly charged Ser-tRNA(Ala) and Gly-tRNA(Ala) via its editing domain. This is Alanine--tRNA ligase from Ligilactobacillus salivarius (strain UCC118) (Lactobacillus salivarius).